The chain runs to 318 residues: Ornithine carbamoyltransferase (318 aa).

Carbamoyl phosphate is bound by residues 63 to 66, Gln90, Arg114, and 141 to 144; these read STRT and HPCQ. Residues Asn172, Asp235, and 239-240 each bind L-ornithine; that span reads SM. Carbamoyl phosphate is bound by residues 275-276 and Arg303; that span reads CL.

Belongs to the aspartate/ornithine carbamoyltransferase superfamily. OTCase family.

The protein resides in the cytoplasm. It carries out the reaction carbamoyl phosphate + L-ornithine = L-citrulline + phosphate + H(+). Its pathway is amino-acid biosynthesis; L-arginine biosynthesis; L-arginine from L-ornithine and carbamoyl phosphate: step 1/3. Reversibly catalyzes the transfer of the carbamoyl group from carbamoyl phosphate (CP) to the N(epsilon) atom of ornithine (ORN) to produce L-citrulline. This chain is Ornithine carbamoyltransferase, found in Prochlorococcus marinus (strain SARG / CCMP1375 / SS120).